Here is a 55-residue protein sequence, read N- to C-terminus: Large ribosomal subunit protein bL33 (55 aa).

Belongs to the bacterial ribosomal protein bL33 family.

This chain is Large ribosomal subunit protein bL33, found in Bordetella avium (strain 197N).